Here is a 764-residue protein sequence, read N- to C-terminus: 1,4-alpha-glucan branching enzyme GlgB (764 aa).

The Nucleophile role is filled by Asp-431. Glu-484 functions as the Proton donor in the catalytic mechanism.

The protein belongs to the glycosyl hydrolase 13 family. GlgB subfamily. As to quaternary structure, monomer.

It catalyses the reaction Transfers a segment of a (1-&gt;4)-alpha-D-glucan chain to a primary hydroxy group in a similar glucan chain.. It participates in glycan biosynthesis; glycogen biosynthesis. Its function is as follows. Catalyzes the formation of the alpha-1,6-glucosidic linkages in glycogen by scission of a 1,4-alpha-linked oligosaccharide from growing alpha-1,4-glucan chains and the subsequent attachment of the oligosaccharide to the alpha-1,6 position. The sequence is that of 1,4-alpha-glucan branching enzyme GlgB from Synechococcus sp. (strain CC9902).